The chain runs to 484 residues: MYIGIDLGTSGVKVILLNEQGEVVAAQTEKLTVSRPHPLWSEQDPEQWWQATDRAMKALGDQHSLQDVKALGIAGQMHGATLLDAQQRVLRPAILWNDGRCAQECTLLEARVPQSRVITGNLMMPGFTAPKLLWVQRHEPEIFRQIDKVLLPKDYLRLRMTGEFASDMSDAAGTMWLDVAKRDWSDVMLQACDLSRDQMPALYEGSEITGALLPEVAKAWGMATVPVVAGGGDNAAGAVGVGMVDANQAMLSLGTSGVYFAVSEGFLSKPESAVHSFCHALPQRWHLMSVMLSAASCLDWAAKLTGLSNVPALIAAAQQADESAEPVWFLPYLSGERTPHNNPQAKGVFFGLTHQHGPNELARAVLEGVGYALADGMDVVHACGIKPQSVTLIGGGARSEYWRQMLADISGQQLDYRTGGDVGPALGAARLAQIAANPEKSLIELLPQLPLEQSHLPDAQRYAAYQPRRETFRRLYQQLLPLMA.

A substrate-binding site is contributed by Met-77 to His-78. Catalysis depends on Asp-233, which acts as the Proton acceptor.

This sequence belongs to the FGGY kinase family. Homodimer.

The catalysed reaction is D-xylulose + ATP = D-xylulose 5-phosphate + ADP + H(+). The enzyme catalyses 1-deoxy-D-xylulose + ATP = 1-deoxy-D-xylulose 5-phosphate + ADP + H(+). Its activity is regulated as follows. Sugar binding is accompanied by a dramatic hinge-bending movement that enhances interactions with Mg-ATP. Functionally, catalyzes the phosphorylation of D-xylulose to D-xylulose 5-phosphate. Also catalyzes the phosphorylation of 1-deoxy-D-xylulose to 1-deoxy-D-xylulose 5-phosphate, with lower efficiency. Can also use D-ribulose, xylitol and D-arabitol, but D-xylulose is preferred over the other substrates. Has a weak substrate-independent Mg-ATP-hydrolyzing activity. This chain is Xylulose kinase, found in Escherichia coli (strain K12).